We begin with the raw amino-acid sequence, 103 residues long: Large ribosomal subunit protein bL21 (103 aa).

The protein belongs to the bacterial ribosomal protein bL21 family. As to quaternary structure, part of the 50S ribosomal subunit. Contacts protein L20.

Its function is as follows. This protein binds to 23S rRNA in the presence of protein L20. This is Large ribosomal subunit protein bL21 from Polaromonas naphthalenivorans (strain CJ2).